A 91-amino-acid chain; its full sequence is MARVTVQDAVEKIGNRFDLVLVAARRARQMQVGGKDPLVPEENDKTTVIALREIEEGLINNQILDVRERQEQQEQEAAELQAVTAIAEGRR.

The protein belongs to the RNA polymerase subunit omega family. In terms of assembly, the RNAP catalytic core consists of 2 alpha, 1 beta, 1 beta' and 1 omega subunit. When a sigma factor is associated with the core the holoenzyme is formed, which can initiate transcription. The rRNA transcription and antitermination complex (rrnTAC) consists of RNAP, NusA, NusB, NusE (rpsJ), NusG, SubB, ribosomal protein S4, DNA and precursor rRNA; S4 is more flexible than other subunits.

The enzyme catalyses RNA(n) + a ribonucleoside 5'-triphosphate = RNA(n+1) + diphosphate. Functionally, promotes RNA polymerase (RNAP) assembly. Latches the N- and C-terminal regions of the beta' subunit thereby facilitating its interaction with the beta and alpha subunits. Its function is as follows. Part of the processive rRNA transcription and antitermination complex (rrnTAC). The complex forms an RNA-chaperone ring around the RNA exit tunnel of RNAP. It supports rapid transcription and antitermination of rRNA operons, cotranscriptional rRNA folding, and annealing of distal rRNA regions to allow correct ribosome biogenesis. The protein is DNA-directed RNA polymerase subunit omega (rpoZ) of Escherichia coli (strain K12).